The primary structure comprises 507 residues: Probable aldehyde dehydrogenase (507 aa).

219-225 (GFGVEAG) contacts NAD(+). Catalysis depends on residues glutamate 263 and cysteine 302.

The protein belongs to the aldehyde dehydrogenase family.

The catalysed reaction is an aldehyde + NAD(+) + H2O = a carboxylate + NADH + 2 H(+). The protein is Probable aldehyde dehydrogenase of Streptomyces coelicolor (strain ATCC BAA-471 / A3(2) / M145).